The chain runs to 62 residues: UPF0370 protein plu2724 (62 aa).

Residues 3–23 (WLADYWWIILILLVGVLLNAI) traverse the membrane as a helical segment. The disordered stretch occupies residues 36 to 62 (DNKPELPPHRDLNSKWDDEDDWPQKKP).

Belongs to the UPF0370 family.

Its subcellular location is the cell membrane. The sequence is that of UPF0370 protein plu2724 from Photorhabdus laumondii subsp. laumondii (strain DSM 15139 / CIP 105565 / TT01) (Photorhabdus luminescens subsp. laumondii).